The primary structure comprises 743 residues: Glycerol-3-phosphate O-acyltransferase 2 (743 aa).

Over 1–34 (MSAPAADHNAAKPIPHVPQASRRYKNSYNGFVYN) the chain is Lumenal. A helical membrane pass occupies residues 35–55 (IHTWLYDVSVFLFNILFTIFF). Topologically, residues 56 to 442 (REIKVRGAYN…TKLEALRCFV (387 aa)) are cytoplasmic. Residues 443–457 (TLIVRLIKFSVFAIL) form a helical membrane-spanning segment. A topological domain (lumenal) is located at residue S458. The helical transmembrane segment at 459 to 473 (LPGSILFTPIFIICR) threads the bilayer. The Cytoplasmic segment spans residues 474–501 (VYSEKKAKEGLKKSLVKIKGTDLLATWK). The helical transmembrane segment at 502-522 (LIVALILAPILYVTYSILLII) threads the bilayer. At 523 to 531 (LARKQHYCR) the chain is on the lumenal side. A helical membrane pass occupies residues 532-552 (IWVPSNNAFIQFVYFYALLVF). At 553–743 (TTYSSLKTGE…RQKREHEKKE (191 aa)) the chain is on the cytoplasmic side. Residues S632, S637, S647, S651, S654, S657, S664, S668, and S671 each carry the phosphoserine modification. T673 is modified (phosphothreonine). The disordered stretch occupies residues 682–743 (KQGQWKSEGE…RQKREHEKKE (62 aa)). Residue S688 is modified to Phosphoserine. Residues 691-700 (ETSEDEDEFD) are compositionally biased toward acidic residues. Phosphothreonine is present on T692. S693 carries the post-translational modification Phosphoserine.

The protein belongs to the GPAT/DAPAT family. In terms of processing, phosphorylated at a conserved motif involving Ser-664, Ser-668 and Ser-671. This phosphorylation plays a critical role for efficient TAG mobilization. Phosphorylation deficiency at this motif increases the enzyme activity and consequently induces de novo formation of phosphatidic acid.

It localises to the lipid droplet. Its subcellular location is the endoplasmic reticulum membrane. The catalysed reaction is sn-glycerol 3-phosphate + an acyl-CoA = a 1-acyl-sn-glycero-3-phosphate + CoA. It carries out the reaction dihydroxyacetone phosphate + an acyl-CoA = a 1-acylglycerone 3-phosphate + CoA. It catalyses the reaction sn-glycerol 3-phosphate + hexadecanoyl-CoA = 1-hexadecanoyl-sn-glycero-3-phosphate + CoA. The enzyme catalyses (9Z)-hexadecenoyl-CoA + sn-glycerol 3-phosphate = 1-(9Z-hexadecenoyl)-sn-glycero-3-phosphate + CoA. The catalysed reaction is sn-glycerol 3-phosphate + octadecanoyl-CoA = 1-octadecanoyl-sn-glycero-3-phosphate + CoA. It carries out the reaction sn-glycerol 3-phosphate + (9Z)-octadecenoyl-CoA = 1-(9Z-octadecenoyl)-sn-glycero-3-phosphate + CoA. It functions in the pathway phospholipid metabolism; CDP-diacylglycerol biosynthesis; CDP-diacylglycerol from sn-glycerol 3-phosphate: step 1/3. In terms of biological role, dual substrate-specific glycerol-3-phosphate/dihydroxyacetone phosphate sn-1 acyltransferase, catalyzing the first and committed reaction in the de novo synthesis of glycerophospholipids and triacylglycerols (TAGs). Can use both Gly-3-P and dihydroxyacetone phosphate with similar efficiencies and has a broad fatty acyl-CoA specificity profile. Transfers a fatty acid from fatty acyl-CoA to the sn-1 position of glycerol-3-phosphate to produce lysophosphatidic acid (LysoPA). These lipids not only are precursors of glycerolipids, but also are dynamic components of signal transduction systems that control cell physiology. The protein is Glycerol-3-phosphate O-acyltransferase 2 (GPT2) of Saccharomyces cerevisiae (strain ATCC 204508 / S288c) (Baker's yeast).